The following is a 356-amino-acid chain: Carbamoyl phosphate synthase small chain (356 aa).

Positions 1 to 160 are CPSase; sequence MKGYLKLEDG…TKKPYRIAGI (160 aa). 3 residues coordinate L-glutamine: serine 45, glycine 211, and glycine 213. The Glutamine amidotransferase type-1 domain occupies 163 to 350; sequence KLAFIDLGTK…MDIVMVYKRR (188 aa). Cysteine 238 (nucleophile) is an active-site residue. L-glutamine is bound by residues leucine 239, glutamine 242, asparagine 280, glycine 282, and tyrosine 283. Active-site residues include histidine 323 and glutamate 325.

Belongs to the CarA family. Composed of two chains; the small (or glutamine) chain promotes the hydrolysis of glutamine to ammonia, which is used by the large (or ammonia) chain to synthesize carbamoyl phosphate. Tetramer of heterodimers (alpha,beta)4.

The enzyme catalyses hydrogencarbonate + L-glutamine + 2 ATP + H2O = carbamoyl phosphate + L-glutamate + 2 ADP + phosphate + 2 H(+). It carries out the reaction L-glutamine + H2O = L-glutamate + NH4(+). It functions in the pathway amino-acid biosynthesis; L-arginine biosynthesis; carbamoyl phosphate from bicarbonate: step 1/1. Its pathway is pyrimidine metabolism; UMP biosynthesis via de novo pathway; (S)-dihydroorotate from bicarbonate: step 1/3. In terms of biological role, small subunit of the glutamine-dependent carbamoyl phosphate synthetase (CPSase). CPSase catalyzes the formation of carbamoyl phosphate from the ammonia moiety of glutamine, carbonate, and phosphate donated by ATP, constituting the first step of 2 biosynthetic pathways, one leading to arginine and/or urea and the other to pyrimidine nucleotides. The small subunit (glutamine amidotransferase) binds and cleaves glutamine to supply the large subunit with the substrate ammonia. This chain is Carbamoyl phosphate synthase small chain, found in Caldanaerobacter subterraneus subsp. tengcongensis (strain DSM 15242 / JCM 11007 / NBRC 100824 / MB4) (Thermoanaerobacter tengcongensis).